Here is a 190-residue protein sequence, read N- to C-terminus: MYVAIEGVDTCGKSTQIALLKRRFPGAIFTKEPGGTALGMKLRELLLGGEAKSAKAELLLFLADRAEHMELVIKPALDKLLFSDRSLISGMAYAKGWDELWLKSLNLFATEGIVPDKVVILELTAKELSYRLSQKSHDSIESRGVEYLLELQERIKQMTALLGIPSLTLSASLSPEEIHGRIVSGFVLKG.

7-14 (GVDTCGKS) lines the ATP pocket.

It belongs to the thymidylate kinase family.

The catalysed reaction is dTMP + ATP = dTDP + ADP. In terms of biological role, phosphorylation of dTMP to form dTDP in both de novo and salvage pathways of dTTP synthesis. This is Thymidylate kinase from Wolinella succinogenes (strain ATCC 29543 / DSM 1740 / CCUG 13145 / JCM 31913 / LMG 7466 / NCTC 11488 / FDC 602W) (Vibrio succinogenes).